Reading from the N-terminus, the 709-residue chain is Disintegrin and metalloproteinase domain-containing protein 5 (709 aa).

The propeptide occupies 1–98 (MKTPISSILK…TLSGFIHVIY (98 aa)). The Extracellular segment spans residues 1 to 649 (MKTPISSILK…QQNRGIHPKQ (649 aa)). Residues 141-334 (RYIKTDIVVD…QDLECLQDLP (194 aa)) form the Peptidase M12B domain. 7 disulfides stabilise this stretch: Cys247-Cys329, Cys289-Cys314, Cys291-Cys296, Cys406-Cys426, Cys585-Cys597, Cys591-Cys603, and Cys605-Cys614. Positions 346-434 (RRICGNGILE…YCVPDTFARN (89 aa)) constitute a Disintegrin domain. The region spanning 581–615 (DFQQCNTSRDCNDHGVCNNFNHCHCDKGYNPPYCE) is the EGF-like; calcium-binding domain. The helical transmembrane segment at 650-670 (QLQLILYITLPLIMIISAVFI) threads the bilayer. At 671 to 709 (KQSKLSRLCGRERSEGTSCITEDSVSNTKMTTNEGSTLH) the chain is on the cytoplasmic side. The segment at 690 to 709 (ITEDSVSNTKMTTNEGSTLH) is disordered.

As to quaternary structure, interacts with TEX101. Detected in testis.

The protein localises to the membrane. Functionally, this is a non catalytic metalloprotease-like protein. May play a role in sperm-egg fusion. This chain is Disintegrin and metalloproteinase domain-containing protein 5 (Adam5), found in Rattus norvegicus (Rat).